The chain runs to 188 residues: Peptidyl-tRNA hydrolase (188 aa).

Tyr16 is a tRNA binding site. His21 (proton acceptor) is an active-site residue. TRNA-binding residues include Phe66, Asn68, and Asn114.

It belongs to the PTH family. Monomer.

The protein localises to the cytoplasm. The enzyme catalyses an N-acyl-L-alpha-aminoacyl-tRNA + H2O = an N-acyl-L-amino acid + a tRNA + H(+). Its function is as follows. Hydrolyzes ribosome-free peptidyl-tRNAs (with 1 or more amino acids incorporated), which drop off the ribosome during protein synthesis, or as a result of ribosome stalling. Catalyzes the release of premature peptidyl moieties from peptidyl-tRNA molecules trapped in stalled 50S ribosomal subunits, and thus maintains levels of free tRNAs and 50S ribosomes. In Geobacter sp. (strain M21), this protein is Peptidyl-tRNA hydrolase.